The primary structure comprises 1469 residues: MLSTTMPRSPTQQQPQPNSDASSTSASGSNPGAAIGNGDSAASRSSPKTLNSEPFSTLSPDQIKLTPEEGTEKSGLSTSDKAATGGAPGSGNNLPEGQTMLRQNSTSTINSCLVASPQNSSEHSNSSNVSATVGLTQMVDCDEQSKKNKCSVKDEEAEISSNKAKGQAAGGGCETGSTSSLTVKEEPTDVLGSLVNMKKEERENHSPTMSPVGFGSIGNAQDNSATPVKIERISNDSTTEKKGSSLTMNNDEMSMEGCNQLNPDFINESLNNPAISSILVSGVGPIPGIGVGAGTGNLLTANANGISSGSSNCLDYMQQQNHIFVFSTQLANKGAESVLSGQFQTIIAYHCTQPATKSFLEDFFMKNPLKINKLQRHNSVGMPWIGMGQVGLTPPNPVAKITQQQPHTKTVGLLKPQFNQHENSKRSTVSAPSNSFVDQSDPMGNETELMCWEGGSSNTSRSGQNSRNHVDSISTSSESQAIKILEAAGVDLGQVTKGSDPGLTTENNIVSLQGVKVPDENLTPQQRQHREEQLAKIKKMNQFLFPENENSVGANVSSQITKIPGDLMMGMSGGGGGSIINPTMRQLHMPGNAKSELLSATSSGLSEDVMHPGDVISDMGAVIGCNNNQKTSVQCGSGVGVVTGTTAAGVNVNMHCSSSGAPNGNMMGSSTDMLASFGNTSCNVIGTAPDMSKEVLNQDSRTHSHQGGVAQMEWSKIQHQFFEERLKGGKPRQVTGTVVPQQQTPSGSGGNSLNNQVRPLQGPPPPYHSIQRSASVPIATQSPNPSSPNNLSLPSPRTTAAVMGLPTNSPSMDGTGSLSGSVPQANTSTVQAGTTTVLSANKNCFQADTPSPSNQNRSRNTGSSSVLTHNLSSNPSTPLSHLSPKEFESFGQSSAGDNMKSRRPSPQGQRSPVNSLIEANKDVRFAASSPGFNPHPHMQSNSNSALNAYKMGSTNIQMERQASAQGGSVQFSRRSDNIPLNPNSGNRPPPNKMTQNFDPISSLAQMSQQLTSCVSSMGSPAGTGGMTMMGGPGPSDINIEHGIISGLDGSGIDTINQNNCHSMNVVMNSMGPRMLNPKMCVAGGPNGPPGFNPNSPNGGLRENSIGSGCGSANSSNFQGVVPPGARMMGRMPVNFGSNFNPNIQVKASTPNTIQYMPVRAQNANNNNNNGANNVRMPPSLEFLQRYANPQMGAVGNGSPICPPSASDGTPGMPGLMAGPGAGGMLMNSSGEQHQNKITNNPGASNGINFFQNCNQMSIVDEEGGLPGHDGSMNIGQPSMIRGMRPHAMRPNVMGARMPPVNRQIQFAQSSDGIDCVGDPSSFFTNASCNSAGPHMFGSAQQANQPKTQHIKNIPSGMCQNQSGLAVAQGQIQLHGQGHAQGQSLIGPTNNNLMSTAGSVSATNGVSGINFVGPSSTDLKYAQQYHSFQQQLYATNTRSQQQQHMHQQHQSNMITMPPNLSPNPTFFVNK.

Polar residues predominate over residues 1 to 16; the sequence is MLSTTMPRSPTQQQPQ. Disordered regions lie at residues 1–131, 161–187, 200–222, 422–442, and 454–474; these read MLST…NVSA, SNKAKGQAAGGGCETGSTSSLTVKEEP, EERENHSPTMSPVGFGSIGNAQD, ENSKRSTVSAPSNSFVDQSDP, and GGSSNTSRSGQNSRNHVDSIS. S9 is modified (phosphoserine). Phosphothreonine is present on T11. Residues 17–34 show a composition bias toward low complexity; that stretch reads PNSDASSTSASGSNPGAA. Polar residues-rich tracts occupy residues 40-60 and 90-113; these read SAASRSSPKTLNSEPFSTLSP and SGNNLPEGQTMLRQNSTSTINSCL. Residues 116–130 are compositionally biased toward low complexity; the sequence is SPQNSSEHSNSSNVS. S206 bears the Phosphoserine mark. T208 bears the Phosphothreonine mark. S210 bears the Phosphoserine mark. Polar residues-rich tracts occupy residues 422–438 and 455–474; these read ENSKRSTVSAPSNSFVD and GSSNTSRSGQNSRNHVDSIS. The tract at residues 511–555 is ARM-binding; that stretch reads SLQGVKVPDENLTPQQRQHREEQLAKIKKMNQFLFPENENSVGAN. Disordered stretches follow at residues 728 to 830, 844 to 913, and 961 to 991; these read GGKP…TSTV, CFQA…RSPV, and QASAQGGSVQFSRRSDNIPLNPNSGNRPPPN. The span at 731-745 shows a compositional bias: low complexity; it reads PRQVTGTVVPQQQTP. Over residues 770 to 781 the composition is skewed to polar residues; sequence IQRSASVPIATQ. Residues 782–796 are compositionally biased toward low complexity; the sequence is SPNPSSPNNLSLPSP. Polar residues-rich tracts occupy residues 806–830 and 844–880; these read PTNSPSMDGTGSLSGSVPQANTSTV and CFQADTPSPSNQNRSRNTGSSSVLTHNLSSNPSTPLS. A phosphoserine mark is found at S883, S905, and S911. Positions 904–913 are enriched in polar residues; that stretch reads PSPQGQRSPV.

The protein belongs to the BCL9 family. As to quaternary structure, binds to ARM and PYGO.

The protein resides in the nucleus. Functionally, involved in signal transduction through the Wnt pathway. This chain is Protein BCL9 homolog (lgs), found in Drosophila melanogaster (Fruit fly).